A 146-amino-acid chain; its full sequence is 3-dehydroquinate dehydratase (146 aa).

Tyr24 (proton acceptor) is an active-site residue. The substrate site is built by Asn75, His81, and Asp88. His101 serves as the catalytic Proton donor. Substrate-binding positions include 102 to 103 and Arg112; that span reads LS.

Belongs to the type-II 3-dehydroquinase family. In terms of assembly, homododecamer.

The enzyme catalyses 3-dehydroquinate = 3-dehydroshikimate + H2O. It participates in metabolic intermediate biosynthesis; chorismate biosynthesis; chorismate from D-erythrose 4-phosphate and phosphoenolpyruvate: step 3/7. Functionally, catalyzes a trans-dehydration via an enolate intermediate. This chain is 3-dehydroquinate dehydratase, found in Maricaulis maris (strain MCS10) (Caulobacter maris).